Reading from the N-terminus, the 472-residue chain is Glutamine synthetase (472 aa).

A GS beta-grasp domain is found at 17 to 101 (YDIKFVLLRF…LRCSIYEPST (85 aa)). The 364-residue stretch at 109-472 (PRSIAIRAEN…HPVEFEMYYA (364 aa)) folds into the GS catalytic domain. Glu-134 and Glu-136 together coordinate Mg(2+). Glu-212 is a binding site for ATP. Mg(2+) is bound by residues Glu-217 and Glu-225. Residues 269-270 (NG) and Gly-270 each bind L-glutamate. His-274 is a binding site for Mg(2+). ATP is bound by residues 276–278 (NMS) and Ser-278. Arg-326, Glu-332, and Arg-344 together coordinate L-glutamate. Residues Arg-344, Arg-349, and Lys-357 each contribute to the ATP site. A Mg(2+)-binding site is contributed by Glu-362. Arg-364 contributes to the L-glutamate binding site. O-AMP-tyrosine is present on Tyr-402.

This sequence belongs to the glutamine synthetase family. In terms of assembly, oligomer of 12 subunits arranged in the form of two hexameric ring. Mg(2+) is required as a cofactor.

It is found in the cytoplasm. It catalyses the reaction L-glutamate + NH4(+) + ATP = L-glutamine + ADP + phosphate + H(+). The activity of this enzyme could be controlled by adenylation under conditions of abundant glutamine. Functionally, catalyzes the ATP-dependent biosynthesis of glutamine from glutamate and ammonia. The chain is Glutamine synthetase from Pasteurella multocida (strain Pm70).